The following is a 704-amino-acid chain: UvrABC system protein B (704 aa).

Residues glutamate 35–methionine 188 enclose the Helicase ATP-binding domain. Glycine 48–serine 55 provides a ligand contact to ATP. A Beta-hairpin motif is present at residues tyrosine 101–isoleucine 124. Residues glutamine 438–threonine 604 form the Helicase C-terminal domain. Positions valine 659–glutamate 694 constitute a UVR domain.

This sequence belongs to the UvrB family. As to quaternary structure, forms a heterotetramer with UvrA during the search for lesions. Interacts with UvrC in an incision complex.

Its subcellular location is the cytoplasm. The UvrABC repair system catalyzes the recognition and processing of DNA lesions. A damage recognition complex composed of 2 UvrA and 2 UvrB subunits scans DNA for abnormalities. Upon binding of the UvrA(2)B(2) complex to a putative damaged site, the DNA wraps around one UvrB monomer. DNA wrap is dependent on ATP binding by UvrB and probably causes local melting of the DNA helix, facilitating insertion of UvrB beta-hairpin between the DNA strands. Then UvrB probes one DNA strand for the presence of a lesion. If a lesion is found the UvrA subunits dissociate and the UvrB-DNA preincision complex is formed. This complex is subsequently bound by UvrC and the second UvrB is released. If no lesion is found, the DNA wraps around the other UvrB subunit that will check the other stand for damage. This is UvrABC system protein B from Pseudarthrobacter chlorophenolicus (strain ATCC 700700 / DSM 12829 / CIP 107037 / JCM 12360 / KCTC 9906 / NCIMB 13794 / A6) (Arthrobacter chlorophenolicus).